Here is a 257-residue protein sequence, read N- to C-terminus: Imidazole glycerol phosphate synthase subunit HisF (257 aa).

Catalysis depends on residues aspartate 12 and aspartate 131.

The protein belongs to the HisA/HisF family. Heterodimer of HisH and HisF.

The protein localises to the cytoplasm. It catalyses the reaction 5-[(5-phospho-1-deoxy-D-ribulos-1-ylimino)methylamino]-1-(5-phospho-beta-D-ribosyl)imidazole-4-carboxamide + L-glutamine = D-erythro-1-(imidazol-4-yl)glycerol 3-phosphate + 5-amino-1-(5-phospho-beta-D-ribosyl)imidazole-4-carboxamide + L-glutamate + H(+). Its pathway is amino-acid biosynthesis; L-histidine biosynthesis; L-histidine from 5-phospho-alpha-D-ribose 1-diphosphate: step 5/9. IGPS catalyzes the conversion of PRFAR and glutamine to IGP, AICAR and glutamate. The HisF subunit catalyzes the cyclization activity that produces IGP and AICAR from PRFAR using the ammonia provided by the HisH subunit. In Paraburkholderia phytofirmans (strain DSM 17436 / LMG 22146 / PsJN) (Burkholderia phytofirmans), this protein is Imidazole glycerol phosphate synthase subunit HisF.